Consider the following 449-residue polypeptide: 3-phosphoshikimate 1-carboxyvinyltransferase (449 aa).

Residues 1 to 23 (MSHSASPKPATARRSEALTGEIR) are disordered. 3-phosphoshikimate is bound by residues Lys28, Ser29, and Arg33. Lys28 contacts phosphoenolpyruvate. Residues Gly100 and Arg128 each contribute to the phosphoenolpyruvate site. Residues Ser173, Gln175, Asp326, and Lys353 each contribute to the 3-phosphoshikimate site. Gln175 is a binding site for phosphoenolpyruvate. Asp326 acts as the Proton acceptor in catalysis. Positions 357 and 402 each coordinate phosphoenolpyruvate.

It belongs to the EPSP synthase family. As to quaternary structure, monomer.

The protein localises to the cytoplasm. It carries out the reaction 3-phosphoshikimate + phosphoenolpyruvate = 5-O-(1-carboxyvinyl)-3-phosphoshikimate + phosphate. It functions in the pathway metabolic intermediate biosynthesis; chorismate biosynthesis; chorismate from D-erythrose 4-phosphate and phosphoenolpyruvate: step 6/7. Functionally, catalyzes the transfer of the enolpyruvyl moiety of phosphoenolpyruvate (PEP) to the 5-hydroxyl of shikimate-3-phosphate (S3P) to produce enolpyruvyl shikimate-3-phosphate and inorganic phosphate. In Pseudomonas sp. (strain PG2982), this protein is 3-phosphoshikimate 1-carboxyvinyltransferase.